Consider the following 572-residue polypeptide: Proline--tRNA ligase (572 aa).

Belongs to the class-II aminoacyl-tRNA synthetase family. ProS type 1 subfamily. As to quaternary structure, homodimer.

It localises to the cytoplasm. The enzyme catalyses tRNA(Pro) + L-proline + ATP = L-prolyl-tRNA(Pro) + AMP + diphosphate. Catalyzes the attachment of proline to tRNA(Pro) in a two-step reaction: proline is first activated by ATP to form Pro-AMP and then transferred to the acceptor end of tRNA(Pro). As ProRS can inadvertently accommodate and process non-cognate amino acids such as alanine and cysteine, to avoid such errors it has two additional distinct editing activities against alanine. One activity is designated as 'pretransfer' editing and involves the tRNA(Pro)-independent hydrolysis of activated Ala-AMP. The other activity is designated 'posttransfer' editing and involves deacylation of mischarged Ala-tRNA(Pro). The misacylated Cys-tRNA(Pro) is not edited by ProRS. In Erwinia tasmaniensis (strain DSM 17950 / CFBP 7177 / CIP 109463 / NCPPB 4357 / Et1/99), this protein is Proline--tRNA ligase.